The following is a 424-amino-acid chain: Translation initiation factor 2 subunit gamma (424 aa).

The 198-residue stretch at Leu23 to Glu220 folds into the tr-type G domain. Residues Gly32–Thr39 are G1. The Mg(2+) site is built by Asp35, Thr39, Gly60, and Ser62. Residue Asp35–Thr40 participates in GTP binding. The segment at Gly60–Lys64 is G2. A G3 region spans residues Asp107–Gly110. Residues Asn163–Asp166 and Ser198–Gln200 each bind GTP. Positions Asn163–Asp166 are G4. A G5 region spans residues Ser198 to Gln200.

The protein belongs to the TRAFAC class translation factor GTPase superfamily. Classic translation factor GTPase family. EIF2G subfamily. In terms of assembly, heterotrimer composed of an alpha, a beta and a gamma chain. Requires Mg(2+) as cofactor.

The catalysed reaction is GTP + H2O = GDP + phosphate + H(+). Its function is as follows. eIF-2 functions in the early steps of protein synthesis by forming a ternary complex with GTP and initiator tRNA. The chain is Translation initiation factor 2 subunit gamma from Archaeoglobus fulgidus (strain ATCC 49558 / DSM 4304 / JCM 9628 / NBRC 100126 / VC-16).